The sequence spans 350 residues: MNELDSLVDAARRMFADAATPTDLENAKAQFLGKAGRVTELLKGLAQLPVEEKKSRGAAVNVAKQAIEQALNERRQALADAELQAQLQAEALDVTLPGRQRGQGGLHPVSLTLERIEGIFGSMGFDVADGPEIESDWFNFTALNTPEDHPARSMHDTFYVEGGTASAPLLLRTHTSPMQIRHAVQHVKKHRALLDAGQPMPEIRVIAPGRTYRVDSDATHSPMFHQCEGLWIGENVSFKDLKVVFTAFCRTFFESDDLVLRFRPSFFPFTEPSAEIDIQFQDGPLAGRWLEVAGSGQVHPNVVRNMGLDPEKYIGFAFGMGPDRLTMLRYGVNDLRLFFDGDIRFLSQFQ.

Glutamate 271 contacts Mg(2+).

This sequence belongs to the class-II aminoacyl-tRNA synthetase family. Phe-tRNA synthetase alpha subunit type 1 subfamily. In terms of assembly, tetramer of two alpha and two beta subunits. It depends on Mg(2+) as a cofactor.

Its subcellular location is the cytoplasm. The enzyme catalyses tRNA(Phe) + L-phenylalanine + ATP = L-phenylalanyl-tRNA(Phe) + AMP + diphosphate + H(+). This chain is Phenylalanine--tRNA ligase alpha subunit, found in Paracidovorax citrulli (strain AAC00-1) (Acidovorax citrulli).